The chain runs to 555 residues: Urocanate hydratase (555 aa).

NAD(+) contacts are provided by residues 51-52, Q129, 175-177, E195, 262-266, 272-273, and Y321; these read GG, GMG, QTSAH, and YL. C409 is a catalytic residue. G491 lines the NAD(+) pocket.

The protein belongs to the urocanase family. The cofactor is NAD(+).

Its subcellular location is the cytoplasm. It catalyses the reaction 4-imidazolone-5-propanoate = trans-urocanate + H2O. It functions in the pathway amino-acid degradation; L-histidine degradation into L-glutamate; N-formimidoyl-L-glutamate from L-histidine: step 2/3. Catalyzes the conversion of urocanate to 4-imidazolone-5-propionate. The polypeptide is Urocanate hydratase (Xanthomonas euvesicatoria pv. vesicatoria (strain 85-10) (Xanthomonas campestris pv. vesicatoria)).